A 381-amino-acid chain; its full sequence is Chaperone protein DnaJ (381 aa).

Positions 5–70 (DFYEVLGVSR…QKKAAYDQYG (66 aa)) constitute a J domain. Residues 136–214 (GVTKEIEVPT…CHGQGRKQKT (79 aa)) form a CR-type zinc finger. Zn(2+) contacts are provided by cysteine 149, cysteine 152, cysteine 166, cysteine 169, cysteine 188, cysteine 191, cysteine 202, and cysteine 205. 4 CXXCXGXG motif repeats span residues 149–156 (CDSCDGSG), 166–173 (CGTCHGHG), 188–195 (CPTCHGKG), and 202–209 (CNECHGQG).

This sequence belongs to the DnaJ family. As to quaternary structure, homodimer. The cofactor is Zn(2+).

It localises to the cytoplasm. Participates actively in the response to hyperosmotic and heat shock by preventing the aggregation of stress-denatured proteins and by disaggregating proteins, also in an autonomous, DnaK-independent fashion. Unfolded proteins bind initially to DnaJ; upon interaction with the DnaJ-bound protein, DnaK hydrolyzes its bound ATP, resulting in the formation of a stable complex. GrpE releases ADP from DnaK; ATP binding to DnaK triggers the release of the substrate protein, thus completing the reaction cycle. Several rounds of ATP-dependent interactions between DnaJ, DnaK and GrpE are required for fully efficient folding. Also involved, together with DnaK and GrpE, in the DNA replication of plasmids through activation of initiation proteins. This Vibrio parahaemolyticus serotype O3:K6 (strain RIMD 2210633) protein is Chaperone protein DnaJ.